A 391-amino-acid chain; its full sequence is 3-ketoacyl-CoA thiolase (391 aa).

Cys-95 serves as the catalytic Acyl-thioester intermediate. Residues His-347 and Cys-377 each act as proton acceptor in the active site.

The protein belongs to the thiolase-like superfamily. Thiolase family. Heterotetramer of two alpha chains (FadB) and two beta chains (FadA).

It localises to the cytoplasm. It catalyses the reaction an acyl-CoA + acetyl-CoA = a 3-oxoacyl-CoA + CoA. It functions in the pathway lipid metabolism; fatty acid beta-oxidation. Catalyzes the final step of fatty acid oxidation in which acetyl-CoA is released and the CoA ester of a fatty acid two carbons shorter is formed. The chain is 3-ketoacyl-CoA thiolase from Pseudomonas putida (Arthrobacter siderocapsulatus).